The sequence spans 217 residues: FMN-dependent NADH:quinone oxidoreductase (217 aa).

FMN contacts are provided by residues Ser-10 and 16-18 (SVS).

It belongs to the azoreductase type 1 family. Homodimer. FMN is required as a cofactor.

It carries out the reaction 2 a quinone + NADH + H(+) = 2 a 1,4-benzosemiquinone + NAD(+). The catalysed reaction is N,N-dimethyl-1,4-phenylenediamine + anthranilate + 2 NAD(+) = 2-(4-dimethylaminophenyl)diazenylbenzoate + 2 NADH + 2 H(+). Its function is as follows. Quinone reductase that provides resistance to thiol-specific stress caused by electrophilic quinones. Functionally, also exhibits azoreductase activity. Catalyzes the reductive cleavage of the azo bond in aromatic azo compounds to the corresponding amines. The polypeptide is FMN-dependent NADH:quinone oxidoreductase (Polaromonas naphthalenivorans (strain CJ2)).